A 193-amino-acid polypeptide reads, in one-letter code: dCTP deaminase (193 aa).

DCTP-binding positions include 110–115, Asp-128, 136–138, Tyr-171, Lys-178, and Gln-182; these read RSSLAR and VLE. Residue Glu-138 is the Proton donor/acceptor of the active site. Positions 169–193 are disordered; it reads RPYNSRQDAKYRDQQGAVASRIDKD.

Belongs to the dCTP deaminase family. Homotrimer.

The enzyme catalyses dCTP + H2O + H(+) = dUTP + NH4(+). The protein operates within pyrimidine metabolism; dUMP biosynthesis; dUMP from dCTP (dUTP route): step 1/2. Catalyzes the deamination of dCTP to dUTP. The protein is dCTP deaminase of Serratia proteamaculans (strain 568).